A 103-amino-acid polypeptide reads, in one-letter code: NAD(P)H-quinone oxidoreductase subunit 4L, organellar chromatophore (103 aa).

Helical transmembrane passes span 3–23 (IMLE…VWGL), 32–52 (VLMS…AFSN), and 63–83 (VFAI…LAIL).

This sequence belongs to the complex I subunit 4L family. In terms of assembly, NDH is composed of at least 16 different subunits, 5 of which are encoded in the nucleus.

It is found in the plastid. The protein localises to the organellar chromatophore thylakoid membrane. It catalyses the reaction a plastoquinone + NADH + (n+1) H(+)(in) = a plastoquinol + NAD(+) + n H(+)(out). The catalysed reaction is a plastoquinone + NADPH + (n+1) H(+)(in) = a plastoquinol + NADP(+) + n H(+)(out). Functionally, NDH shuttles electrons from NAD(P)H:plastoquinone, via FMN and iron-sulfur (Fe-S) centers, to quinones in the photosynthetic chain and possibly in a chloroplast respiratory chain. The immediate electron acceptor for the enzyme in this species is believed to be plastoquinone. Couples the redox reaction to proton translocation, and thus conserves the redox energy in a proton gradient. The protein is NAD(P)H-quinone oxidoreductase subunit 4L, organellar chromatophore of Paulinella chromatophora.